The following is a 115-amino-acid chain: MIGIDIVKIDRVTSAKSKFKSKFIYKFLLSSEVALVKNDASLAGIWAAKEAASKALGCGIGAELSFLDIEIYKDKKGAPKLKFNENIVKKFNIKNTSLSITHDGGFAIAAVIVEN.

Mg(2+) is bound by residues aspartate 5 and glutamate 50.

The protein belongs to the P-Pant transferase superfamily. AcpS family. Mg(2+) is required as a cofactor.

The protein localises to the cytoplasm. The catalysed reaction is apo-[ACP] + CoA = holo-[ACP] + adenosine 3',5'-bisphosphate + H(+). Functionally, transfers the 4'-phosphopantetheine moiety from coenzyme A to a Ser of acyl-carrier-protein. This is Holo-[acyl-carrier-protein] synthase from Campylobacter fetus subsp. fetus (strain 82-40).